A 136-amino-acid polypeptide reads, in one-letter code: Ribosome-binding factor A (136 aa).

This sequence belongs to the RbfA family. As to quaternary structure, monomer. Binds 30S ribosomal subunits, but not 50S ribosomal subunits or 70S ribosomes.

It localises to the cytoplasm. Its function is as follows. One of several proteins that assist in the late maturation steps of the functional core of the 30S ribosomal subunit. Associates with free 30S ribosomal subunits (but not with 30S subunits that are part of 70S ribosomes or polysomes). Required for efficient processing of 16S rRNA. May interact with the 5'-terminal helix region of 16S rRNA. The chain is Ribosome-binding factor A from Photorhabdus laumondii subsp. laumondii (strain DSM 15139 / CIP 105565 / TT01) (Photorhabdus luminescens subsp. laumondii).